A 282-amino-acid chain; its full sequence is Shikimate dehydrogenase (NADP(+)) (282 aa).

Shikimate is bound by residues 15–17 (SKS) and threonine 62. The active-site Proton acceptor is the lysine 66. Residues asparagine 87 and aspartate 103 each contribute to the shikimate site. Residues 128–132 (GAGGA), 152–157 (NRTPAK), and methionine 216 contribute to the NADP(+) site. Tyrosine 218 is a binding site for shikimate. Glycine 240 is an NADP(+) binding site.

It belongs to the shikimate dehydrogenase family. As to quaternary structure, homodimer.

The enzyme catalyses shikimate + NADP(+) = 3-dehydroshikimate + NADPH + H(+). It functions in the pathway metabolic intermediate biosynthesis; chorismate biosynthesis; chorismate from D-erythrose 4-phosphate and phosphoenolpyruvate: step 4/7. Involved in the biosynthesis of the chorismate, which leads to the biosynthesis of aromatic amino acids. Catalyzes the reversible NADPH linked reduction of 3-dehydroshikimate (DHSA) to yield shikimate (SA). This chain is Shikimate dehydrogenase (NADP(+)), found in Nitrosococcus oceani (strain ATCC 19707 / BCRC 17464 / JCM 30415 / NCIMB 11848 / C-107).